Reading from the N-terminus, the 879-residue chain is Metabotropic glutamate receptor 3 (879 aa).

The first 22 residues, 1-22, serve as a signal peptide directing secretion; that stretch reads MKMLTRLQVLTLALFSKGFLLS. Topologically, residues 23 to 576 are extracellular; the sequence is LGDHNFLRRE…EDYIRWEDAW (554 aa). A disulfide bridge links cysteine 57 with cysteine 99. L-glutamate-binding positions include serine 151 and 172 to 174; that span reads AST. N-linked (GlcNAc...) asparagine glycosylation is present at asparagine 209. Residue tyrosine 222 coordinates L-glutamate. 7 cysteine pairs are disulfide-bonded: cysteine 240-cysteine 527, cysteine 361-cysteine 373, cysteine 412-cysteine 419, cysteine 509-cysteine 528, cysteine 513-cysteine 531, cysteine 534-cysteine 546, and cysteine 549-cysteine 562. N-linked (GlcNAc...) asparagine glycosylation is present at asparagine 292. Aspartate 301 contacts L-glutamate. Residue lysine 389 coordinates L-glutamate. N-linked (GlcNAc...) asparagine glycosylation is found at asparagine 414 and asparagine 439. A helical transmembrane segment spans residues 577-599; it reads AIGPVTIACLGFMCTCMVVTVFI. The Cytoplasmic segment spans residues 600–613; the sequence is KHNNTPLVKASGRE. Residues 614-634 form a helical membrane-spanning segment; the sequence is LCYILLFGVGLSYCMTFFFIA. Residues 635 to 645 lie on the Extracellular side of the membrane; it reads KPSPVICALRR. Residues 646 to 664 form a helical membrane-spanning segment; the sequence is LGLGSSFAICYSALLTKTN. Residues 665–688 are Cytoplasmic-facing; that stretch reads CIARIFDGVKNGAQRPKFISPSSQ. A helical membrane pass occupies residues 689–709; that stretch reads VFICLGLILVQIVMVSVWLIL. Residues 710 to 734 lie on the Extracellular side of the membrane; it reads EAPGTRRYTLAEKRETVILKCNVKD. The chain crosses the membrane as a helical span at residues 735–756; the sequence is SSMLISLTYDVILVILCTVYAF. Over 757–769 the chain is Cytoplasmic; that stretch reads KTRKCPENFNEAK. The chain crosses the membrane as a helical span at residues 770-792; that stretch reads FIGFTMYTTCIIWLAFLPIFYVT. The Extracellular portion of the chain corresponds to 793-802; the sequence is SSDYRVQTTT. The helical transmembrane segment at 803–828 threads the bilayer; that stretch reads MCISVSLSGFVVLGCLFAPKVHIILF. Topologically, residues 829 to 879 are cytoplasmic; that stretch reads QPQKNVVTHRLHLNRFSVSGTGTTYSQSSASTYVPTVCNGREVLDSTTSSL.

This sequence belongs to the G-protein coupled receptor 3 family. Interacts with TAMALIN. In terms of tissue distribution, detected in brain cortex, thalamus, subthalamic nucleus, substantia nigra, hypothalamus, hippocampus, corpus callosum, caudate nucleus and amygdala.

The protein resides in the cell membrane. G-protein coupled receptor for glutamate. Ligand binding causes a conformation change that triggers signaling via guanine nucleotide-binding proteins (G proteins) and modulates the activity of down-stream effectors. Signaling inhibits adenylate cyclase activity. The sequence is that of Metabotropic glutamate receptor 3 (GRM3) from Homo sapiens (Human).